Consider the following 317-residue polypeptide: uncharacterized protein (317 aa).

The chain crosses the membrane as a helical span at residues 11-31 (ALLLVIFGSLIVSFAIFFMVL). PASTA domains follow at residues 33 to 100 (NNEI…FISK), 101 to 174 (GAII…LISK), and 180 to 241 (DKHV…TIAK).

It is found in the membrane. This is an uncharacterized protein from Borreliella burgdorferi (strain ATCC 35210 / DSM 4680 / CIP 102532 / B31) (Borrelia burgdorferi).